Consider the following 566-residue polypeptide: DDB1- and CUL4-associated factor 10 (566 aa).

2 disordered regions span residues 1–72 and 87–123; these read MFPF…AERA and TASASQAKLSPSSSPRRRSRPDWRAGGRSRQGLGAGL. Residues Ser-50, Ser-57, Ser-67, Ser-96, Ser-99, and Ser-100 each carry the phosphoserine modification. Low complexity predominate over residues 87–100; it reads TASASQAKLSPSSS. Residue Arg-141 is modified to Omega-N-methylarginine. WD repeat units follow at residues 173-212, 216-254, 258-297, and 303-342; these read RTHGAVFNLEYSPDGSVLTVACEQTEVLLFDPISSKHIKT, AHEDCVNNIRFLDNRLFATCSDDTTIALWDLRKLNTKVC, GHTSWVKNIEYDTNTRLLVTSGFDGNVIIWDTNRCTEDGC, and FHTRFLMRMRLTPDCSKMLISTSSGYLLILHELDLTKSLE. A compositionally biased stretch (low complexity) spans 354–374; sequence TTSSSDLTTTSSSSGSRVSGS. The interval 354 to 413 is disordered; the sequence is TTSSSDLTTTSSSSGSRVSGSPCHHNDSNSTEKHMSRASQREGVSPRNSLEVLTPEVPGE. Position 356 is a phosphoserine (Ser-356). Residues 377–388 show a composition bias toward basic and acidic residues; that stretch reads HHNDSNSTEKHM. 3 WD repeats span residues 415–455, 477–515, and 533–566; these read DRGN…QEGA, VGRGYIKELCFSPDGRMISSPHGYGIRLLGFDKQCSELV, and SHNDVVLTTKFSPTHCQIASGCLSGRVSLYQPKF.

Belongs to the WD repeat DCAF10 family. As to quaternary structure, interacts with DDB1.

The protein operates within protein modification; protein ubiquitination. Functionally, may function as a substrate receptor for CUL4-DDB1 E3 ubiquitin-protein ligase complex. The chain is DDB1- and CUL4-associated factor 10 (Dcaf10) from Mus musculus (Mouse).